The primary structure comprises 119 residues: Holo-[acyl-carrier-protein] synthase (119 aa).

Mg(2+) is bound by residues D8 and E58.

Belongs to the P-Pant transferase superfamily. AcpS family. It depends on Mg(2+) as a cofactor.

It is found in the cytoplasm. It catalyses the reaction apo-[ACP] + CoA = holo-[ACP] + adenosine 3',5'-bisphosphate + H(+). Transfers the 4'-phosphopantetheine moiety from coenzyme A to a Ser of acyl-carrier-protein. This chain is Holo-[acyl-carrier-protein] synthase, found in Bacillus thuringiensis subsp. konkukian (strain 97-27).